The primary structure comprises 92 residues: UPF0250 protein VV0902 (92 aa).

Belongs to the UPF0250 family.

This is UPF0250 protein VV0902 from Vibrio vulnificus (strain YJ016).